A 352-amino-acid chain; its full sequence is S-adenosylmethionine:tRNA ribosyltransferase-isomerase (352 aa).

The protein belongs to the QueA family. In terms of assembly, monomer.

It localises to the cytoplasm. The catalysed reaction is 7-aminomethyl-7-carbaguanosine(34) in tRNA + S-adenosyl-L-methionine = epoxyqueuosine(34) in tRNA + adenine + L-methionine + 2 H(+). Its pathway is tRNA modification; tRNA-queuosine biosynthesis. Transfers and isomerizes the ribose moiety from AdoMet to the 7-aminomethyl group of 7-deazaguanine (preQ1-tRNA) to give epoxyqueuosine (oQ-tRNA). The protein is S-adenosylmethionine:tRNA ribosyltransferase-isomerase of Dechloromonas aromatica (strain RCB).